We begin with the raw amino-acid sequence, 425 residues long: Enolase (425 aa).

Gln162 serves as a coordination point for (2R)-2-phosphoglycerate. Glu204 acts as the Proton donor in catalysis. Asp241, Glu284, and Asp311 together coordinate Mg(2+). The (2R)-2-phosphoglycerate site is built by Lys336, Arg365, Ser366, and Lys387. The active-site Proton acceptor is the Lys336.

This sequence belongs to the enolase family. Mg(2+) is required as a cofactor.

The protein localises to the cytoplasm. The protein resides in the secreted. It localises to the cell surface. The catalysed reaction is (2R)-2-phosphoglycerate = phosphoenolpyruvate + H2O. It participates in carbohydrate degradation; glycolysis; pyruvate from D-glyceraldehyde 3-phosphate: step 4/5. Functionally, catalyzes the reversible conversion of 2-phosphoglycerate (2-PG) into phosphoenolpyruvate (PEP). It is essential for the degradation of carbohydrates via glycolysis. The protein is Enolase of Brucella ovis (strain ATCC 25840 / 63/290 / NCTC 10512).